The chain runs to 562 residues: MASSNNDGPIEPEAEPWRITQNDHLEQDLLEEDAESQERVDIPVDDVEKAFSFKKLWAFTGPGFLMSIAYLDPGNIESDLQSGAQAAYKLLWVLLSAHIIGMLLQRMSARLGVVSGKHMAEVAYQFYPRLPRIILWLMIEIAIVCSDMQEVIGTAIAIFLLSKGFVPLYVGVFITILDTFTFLLIDRYGIRKLELIFGFLILTMTVSFGYEFVVVKPPIGEVISGMVVPWCAGCGKGEFMQAISVVGAVIMPHNLYLHSALVKSRRVDRKDRRRVAEANKYFTLESAIALFLSFFINLFVVAVFAHGLYQKTNADVREMCIARHDIPDADIFPNNTEPVEVDIYKGGIYLGCQFGAIAMFIWGIGIFAAGQSSTMTGTYTGQFVMEGFVKIEWPKWKRVLITRAIAITPTLVLTFYSQGVQNLTGMNDFLNCVQMIQLPFALIPIITFTSSRKIMHDFRSSKVFQIFALITSALILSINVYFISDYVFSRLGSEWYIIMVLAPITFAYVLFVLYLALYCLVSCEIIPDTVSIRGFSFNKSYENDAPWLAVDSSAVHDNAGYQ.

Residues Met-1–Lys-55 lie on the Cytoplasmic side of the membrane. The chain crosses the membrane as a helical span at residues Leu-56–Ile-76. The Extracellular segment spans residues Glu-77–Gly-83. The chain crosses the membrane as a helical span at residues Ala-84–Leu-104. Residues Gln-105 to Glu-140 are Cytoplasmic-facing. Residues Ile-141–Leu-161 form a helical membrane-spanning segment. Residues Ser-162–Gly-164 are Extracellular-facing. A helical membrane pass occupies residues Phe-165 to Ile-185. Over Asp-186–Glu-194 the chain is Cytoplasmic. A helical transmembrane segment spans residues Leu-195 to Val-215. Over Lys-216–Gln-241 the chain is Extracellular. Residues Ala-242–Val-262 traverse the membrane as a helical segment. Residues Lys-263–Ala-287 are Cytoplasmic-facing. A helical transmembrane segment spans residues Ile-288–Leu-308. The Extracellular segment spans residues Tyr-309–Gly-347. Asn-334 is a glycosylation site (N-linked (GlcNAc...) asparagine). Residues Ile-348–Ala-368 traverse the membrane as a helical segment. At Ala-369–Arg-398 the chain is on the cytoplasmic side. Residues Val-399–Gly-419 traverse the membrane as a helical segment. At Val-420–Asp-428 the chain is on the extracellular side. The N-linked (GlcNAc...) asparagine glycan is linked to Asn-422. A helical transmembrane segment spans residues Phe-429–Thr-449. Topologically, residues Ser-450–Lys-462 are cytoplasmic. A helical transmembrane segment spans residues Val-463 to Ile-483. At Ser-484 to Tyr-496 the chain is on the extracellular side. A helical membrane pass occupies residues Ile-497–Leu-517. The Cytoplasmic portion of the chain corresponds to Tyr-518 to Gln-562.

This sequence belongs to the NRAMP family. Expressed in dopaminergic neurons (at protein level). Expressed predominantly in anterior and posterior intestine, rectal gland cell, H-shaped excretory cell, vulva cells, proximal uterus and spermatheca in adults. Weakly expressed in hyp7 hypodermis, pharyngeal muscles and some anterior sensory, ring and posterior head neurons in adults. Expressed in the anchor cell at the larval stage.

The protein resides in the apical cell membrane. It is found in the cytoplasmic vesicle membrane. Probable divalent metal ion transporter which regulates Mn(2+) uptake. The sequence is that of NRAMP-like transporter smf-1 (smf-1) from Caenorhabditis elegans.